Consider the following 789-residue polypeptide: Probable 3-hydroxyacyl-CoA dehydrogenase (789 aa).

Belongs to the 3-hydroxyacyl-CoA dehydrogenase family.

The enzyme catalyses a (3S)-3-hydroxyacyl-CoA + NAD(+) = a 3-oxoacyl-CoA + NADH + H(+). It participates in lipid metabolism; fatty acid beta-oxidation. Its function is as follows. Involved in the degradation of long-chain fatty acids. This Bacillus subtilis (strain 168) protein is Probable 3-hydroxyacyl-CoA dehydrogenase (fadN).